The chain runs to 83 residues: Colicin-E5 immunity protein in ColE9 (83 aa).

This chain is Colicin-E5 immunity protein in ColE9, found in Escherichia coli.